Here is a 1823-residue protein sequence, read N- to C-terminus: Bromodomain-containing protein DDB_G0280777 (1823 aa).

Disordered regions lie at residues 44–83 (DNNNNKRFNENGNQINQIDFNSNKEEEKEEKEEKEKEEDE) and 200–281 (LKQT…RTTS). Positions 65–77 (SNKEEEKEEKEEK) are enriched in basic and acidic residues. The segment covering 210 to 224 (KRRNQQHQNLLKKQK) has biased composition (basic residues). Residues 225 to 250 (IQKEKEEREQKEKEQKEKEQKEKEEQ) show a composition bias toward basic and acidic residues. A compositionally biased stretch (low complexity) spans 251-262 (QQQLFLLQQQQQ). The 108-residue stretch at 306-413 (EAQEEMYDQL…KKSKDLMKNV (108 aa)) folds into the Bromo domain. Disordered regions lie at residues 429–654 (ENKN…EEQT), 753–781 (NCNNNNNNNDNNNNNNIDNDNDNNNNNSL), 855–886 (INDNDDDNNNNNNNNNNNNNNNNNNNNNNNKP), 949–993 (NSSK…DEDF), 1055–1079 (LPNNKSTTTQTTPTTQLQPPPPPPS), 1190–1386 (IDPK…IQAS), 1453–1477 (QLQQQTRQPSQPQTPQMQSQPQTPQ), and 1679–1823 (QQQQ…QKKQ). Low complexity-rich tracts occupy residues 432–486 (NNNN…NTPL), 494–511 (CSPSTISTVSSTPTTPQS), 520–555 (QQQQQQQTQAQQQPTSNSPRNTTTTTTTITSPISPR), and 570–579 (SSSSLSSSSL). Over residues 580-590 (ALNSQNENGVN) the composition is skewed to polar residues. The span at 601–614 (MESEESTNVKKEEN) shows a compositional bias: basic and acidic residues. Over residues 631–643 (EGEEQQEQEDEEQ) the composition is skewed to acidic residues. Composition is skewed to low complexity over residues 753–779 (NCNNNNNNNDNNNNNNIDNDNDNNNNN), 863–884 (NNNNNNNNNNNNNNNNNNNNNN), 949–958 (NSSKSNNNSN), 1055–1071 (LPNNKSTTTQTTPTTQL), and 1205–1378 (NNNN…NNNN). Over residues 1679–1705 (QQQQPQQQQQQPQQQPQQQPQQQQQPQ) the composition is skewed to low complexity. Basic and acidic residues-rich tracts occupy residues 1716-1737 (PKEKDKEREKEKEREREKEKDR) and 1744-1755 (KTESKKESKKSL). Composition is skewed to low complexity over residues 1756-1767 (NDSSNSDINTSV) and 1789-1806 (SSKQPQTTQSNTTTTQDS). Positions 1813-1823 (KKKRGRPQKKQ) are enriched in basic residues.

This chain is Bromodomain-containing protein DDB_G0280777, found in Dictyostelium discoideum (Social amoeba).